We begin with the raw amino-acid sequence, 227 residues long: Cytochrome c oxidase subunit 2 (227 aa).

Residues 1–14 (MAYPFQLGLQDATS) lie on the Mitochondrial intermembrane side of the membrane. The helical transmembrane segment at 15-45 (PIMEELANFHDHTLMIVFLISSLVLYIISSM) threads the bilayer. The Mitochondrial matrix segment spans residues 46–59 (LTTKLTHTSTMDAQ). Residues 60–87 (EVETIWTILPAVILILIALPSLRILYMM) traverse the membrane as a helical segment. Residues 88–227 (DEINNPALTV…HFENWSASMI (140 aa)) lie on the Mitochondrial intermembrane side of the membrane. 6 residues coordinate Cu cation: His161, Cys196, Glu198, Cys200, His204, and Met207. Residue Glu198 participates in Mg(2+) binding.

The protein belongs to the cytochrome c oxidase subunit 2 family. As to quaternary structure, component of the cytochrome c oxidase (complex IV, CIV), a multisubunit enzyme composed of 14 subunits. The complex is composed of a catalytic core of 3 subunits MT-CO1, MT-CO2 and MT-CO3, encoded in the mitochondrial DNA, and 11 supernumerary subunits COX4I, COX5A, COX5B, COX6A, COX6B, COX6C, COX7A, COX7B, COX7C, COX8 and NDUFA4, which are encoded in the nuclear genome. The complex exists as a monomer or a dimer and forms supercomplexes (SCs) in the inner mitochondrial membrane with NADH-ubiquinone oxidoreductase (complex I, CI) and ubiquinol-cytochrome c oxidoreductase (cytochrome b-c1 complex, complex III, CIII), resulting in different assemblies (supercomplex SCI(1)III(2)IV(1) and megacomplex MCI(2)III(2)IV(2)). Found in a complex with TMEM177, COA6, COX18, COX20, SCO1 and SCO2. Interacts with TMEM177 in a COX20-dependent manner. Interacts with COX20. Interacts with COX16. The cofactor is Cu cation.

Its subcellular location is the mitochondrion inner membrane. It catalyses the reaction 4 Fe(II)-[cytochrome c] + O2 + 8 H(+)(in) = 4 Fe(III)-[cytochrome c] + 2 H2O + 4 H(+)(out). Its function is as follows. Component of the cytochrome c oxidase, the last enzyme in the mitochondrial electron transport chain which drives oxidative phosphorylation. The respiratory chain contains 3 multisubunit complexes succinate dehydrogenase (complex II, CII), ubiquinol-cytochrome c oxidoreductase (cytochrome b-c1 complex, complex III, CIII) and cytochrome c oxidase (complex IV, CIV), that cooperate to transfer electrons derived from NADH and succinate to molecular oxygen, creating an electrochemical gradient over the inner membrane that drives transmembrane transport and the ATP synthase. Cytochrome c oxidase is the component of the respiratory chain that catalyzes the reduction of oxygen to water. Electrons originating from reduced cytochrome c in the intermembrane space (IMS) are transferred via the dinuclear copper A center (CU(A)) of subunit 2 and heme A of subunit 1 to the active site in subunit 1, a binuclear center (BNC) formed by heme A3 and copper B (CU(B)). The BNC reduces molecular oxygen to 2 water molecules using 4 electrons from cytochrome c in the IMS and 4 protons from the mitochondrial matrix. The sequence is that of Cytochrome c oxidase subunit 2 (MT-CO2) from Malacomys longipes (Big-eared swamp rat).